The primary structure comprises 731 residues: Catalase-peroxidase (731 aa).

The segment at 1–23 is disordered; the sequence is MSDLKCPFSGHTGAVTPAGNTNN. A cross-link (tryptophyl-tyrosyl-methioninium (Trp-Tyr) (with M-244)) is located at residues 95–218; it reads WHSAGTYRTG…LAAVEMGLIY (124 aa). Histidine 96 acts as the Proton acceptor in catalysis. A cross-link (tryptophyl-tyrosyl-methioninium (Tyr-Met) (with W-95)) is located at residues 218-244; the sequence is YVNPEGPHGEPDPVASGRDVRETFARM. Residue histidine 259 coordinates heme b.

The protein belongs to the peroxidase family. Peroxidase/catalase subfamily. Homodimer or homotetramer. The cofactor is heme b. Formation of the three residue Trp-Tyr-Met cross-link is important for the catalase, but not the peroxidase activity of the enzyme.

It catalyses the reaction H2O2 + AH2 = A + 2 H2O. The catalysed reaction is 2 H2O2 = O2 + 2 H2O. Bifunctional enzyme with both catalase and broad-spectrum peroxidase activity. This chain is Catalase-peroxidase, found in Synechococcus sp. (strain WH7803).